A 400-amino-acid polypeptide reads, in one-letter code: Enoyl-[acyl-carrier-protein] reductase [NADH] (400 aa).

NAD(+) contacts are provided by residues 48–53 (GASTGY), 74–75 (FE), 111–112 (DA), and 139–140 (LA). Tyrosine 225 contacts substrate. Residue tyrosine 235 is the Proton donor of the active site. Residues lysine 244 and 273 to 275 (VVT) each bind NAD(+).

It belongs to the TER reductase family. As to quaternary structure, monomer.

It carries out the reaction a 2,3-saturated acyl-[ACP] + NAD(+) = a (2E)-enoyl-[ACP] + NADH + H(+). It participates in lipid metabolism; fatty acid biosynthesis. Its function is as follows. Involved in the final reduction of the elongation cycle of fatty acid synthesis (FAS II). Catalyzes the reduction of a carbon-carbon double bond in an enoyl moiety that is covalently linked to an acyl carrier protein (ACP). The sequence is that of Enoyl-[acyl-carrier-protein] reductase [NADH] from Burkholderia multivorans (strain ATCC 17616 / 249).